The sequence spans 428 residues: MMTYQEIFNEIKNKAYFKNHRHVLIAVSGGVDSMNLLHFLYLFQDKLKIRIGIAHVNHKQRSESDSEEAYLKCWAKKHDIPIYVSNFEGIFSEKAARDWRYAFFKSIMLKNNYSALVTAHHSDDQAETILMRLIRGSRLRYLSGIKSVQPFANGQLIRPFLTFSKKDLPEIFHFEDSSNRELSFLRNRVRNNYLPLLKQENPRFIQGLNQLALENSLLFQAFKELTNHITTTDLTEFNEQSKSIQYFLLQDYLEGFPDLDLKKSQFTQLLQIIQIAKQGYYYLKKDYYIFIDKFSFKITKIVPKTELVKDEKMLEYDSNLCYRDYYFSFMPKSNEDQGQVNIPLFSLSSIKLRSRQSGDYISFGHFSKKIRRLFIDEKFTIAERQNAIVGEQDGEIIFVLVGDKTYLRKACKHDIMLAKLYIDKLEKG.

An ATP-binding site is contributed by 28 to 33; the sequence is SGGVDS.

Belongs to the tRNA(Ile)-lysidine synthase family.

The protein resides in the cytoplasm. It carries out the reaction cytidine(34) in tRNA(Ile2) + L-lysine + ATP = lysidine(34) in tRNA(Ile2) + AMP + diphosphate + H(+). Functionally, ligates lysine onto the cytidine present at position 34 of the AUA codon-specific tRNA(Ile) that contains the anticodon CAU, in an ATP-dependent manner. Cytidine is converted to lysidine, thus changing the amino acid specificity of the tRNA from methionine to isoleucine. This Streptococcus pyogenes serotype M18 (strain MGAS8232) protein is tRNA(Ile)-lysidine synthase.